The following is a 261-amino-acid chain: Hemin import ATP-binding protein HmuV (261 aa).

Residues Leu-3 to Ala-239 form the ABC transporter domain. Gly-35–Thr-42 is an ATP binding site.

The protein belongs to the ABC transporter superfamily. Heme (hemin) importer (TC 3.A.1.14.5) family. As to quaternary structure, the complex is composed of two ATP-binding proteins (HmuV), two transmembrane proteins (HmuU) and a solute-binding protein (HmuT).

It is found in the cell inner membrane. Part of the ABC transporter complex HmuTUV involved in hemin import. Responsible for energy coupling to the transport system. This is Hemin import ATP-binding protein HmuV from Roseobacter denitrificans (strain ATCC 33942 / OCh 114) (Erythrobacter sp. (strain OCh 114)).